Here is a 194-residue protein sequence, read N- to C-terminus: uncharacterized protein (194 aa).

It belongs to the calycin superfamily. Fatty-acid binding protein (FABP) family.

This is an uncharacterized protein from Caenorhabditis elegans.